The primary structure comprises 322 residues: tRNA dimethylallyltransferase (322 aa).

Residue 18 to 25 coordinates ATP; it reads GPTASGKS. Residue 20–25 coordinates substrate; the sequence is TASGKS. 2 interaction with substrate tRNA regions span residues 43 to 46 and 167 to 171; these read DSRQ and QRLVR.

The protein belongs to the IPP transferase family. In terms of assembly, monomer. Mg(2+) serves as cofactor.

It catalyses the reaction adenosine(37) in tRNA + dimethylallyl diphosphate = N(6)-dimethylallyladenosine(37) in tRNA + diphosphate. Functionally, catalyzes the transfer of a dimethylallyl group onto the adenine at position 37 in tRNAs that read codons beginning with uridine, leading to the formation of N6-(dimethylallyl)adenosine (i(6)A). The polypeptide is tRNA dimethylallyltransferase (Chlorobium phaeobacteroides (strain BS1)).